A 293-amino-acid polypeptide reads, in one-letter code: MEQGTIRLKTGLAEMLKGGVIMDVTTPEQAKIAEEAGACAVMALERVPADIRAAGGVARMADPTIVKKIMEVATIPVMAKARIGHFVEARILESMGVDYIDESEVLTPADDKYHIDKRDFTVPFVCGCRNLGEALRRIAEGAAMIRTKGEPGTGNVVEAVRHCRQVMDEVRMLCALPEAEVPNFAKEMGAPLELCLLVRKEGRLPVVNFAAGGIATPADAAMMMHLGCDGVFVGSGIFKSGDPAKRARAIVQAVTNYKDFALLAEISRDLGEPMVGIEISTIPSGERMQERGW.

Aspartate 23 contacts D-ribose 5-phosphate. Lysine 80 serves as the catalytic Schiff-base intermediate with D-ribose 5-phosphate. A D-ribose 5-phosphate-binding site is contributed by glycine 152. Arginine 164 serves as a coordination point for D-glyceraldehyde 3-phosphate. D-ribose 5-phosphate is bound by residues glycine 213 and 234–235 (GS).

The protein belongs to the PdxS/SNZ family. As to quaternary structure, in the presence of PdxT, forms a dodecamer of heterodimers.

The catalysed reaction is aldehydo-D-ribose 5-phosphate + D-glyceraldehyde 3-phosphate + L-glutamine = pyridoxal 5'-phosphate + L-glutamate + phosphate + 3 H2O + H(+). Its pathway is cofactor biosynthesis; pyridoxal 5'-phosphate biosynthesis. Its function is as follows. Catalyzes the formation of pyridoxal 5'-phosphate from ribose 5-phosphate (RBP), glyceraldehyde 3-phosphate (G3P) and ammonia. The ammonia is provided by the PdxT subunit. Can also use ribulose 5-phosphate and dihydroxyacetone phosphate as substrates, resulting from enzyme-catalyzed isomerization of RBP and G3P, respectively. The protein is Pyridoxal 5'-phosphate synthase subunit PdxS of Desulfovibrio desulfuricans (strain ATCC 27774 / DSM 6949 / MB).